The primary structure comprises 874 residues: Ribosome biogenesis protein ERB1 (874 aa).

Residues 1 to 148 (MAKKEVSASK…DAFAAADAAT (148 aa)) form a disordered region. Basic and acidic residues predominate over residues 27–41 (QAVEKEEAEKEKEEG). Residues 55-77 (PESDSDDEGAAAAEEEEEEEEQQ) show a composition bias toward acidic residues. A compositionally biased stretch (basic and acidic residues) spans 78-89 (QDVKELDLDKGE). Acidic residues-rich tracts occupy residues 95 to 104 (SDAEDFDSEE) and 128 to 139 (PKEDGDEQDEQD). The required for interaction with NOP7 stretch occupies residues 312–429 (RFVPSKHEAK…LRLVPGYQDS (118 aa)). A required for interaction with YTM1 region spans residues 429–465 (SVRERFERSLDLYLAPRLRKNKLNIDPESLIPELPSP). WD repeat units lie at residues 481–520 (GHTG…QVFK) and 529–569 (NGED…FEIE). The span at 593 to 602 (KVKGEDTKGD) shows a compositional bias: basic and acidic residues. The disordered stretch occupies residues 593 to 640 (KVKGEDTKGDLDDDEEEEEEEEDDDDDEGQGKVKAHNSTAPAKKDVAK). Residues 603–620 (LDDDEEEEEEEEDDDDDE) show a composition bias toward acidic residues. WD repeat units follow at residues 658-700 (QCRR…SQSP), 703-741 (KSKG…LLKK), 744-783 (PGVR…TPYK), 787-827 (YHEK…DLMT), and 843-874 (INQI…LWTT).

This sequence belongs to the WD repeat BOP1/ERB1 family. In terms of assembly, component of the NOP7 complex, composed of ERB1, NOP7 and YTM1. The complex is held together by ERB1, which interacts with NOP7 via its N-terminal domain and with YTM1 via a high-affinity interaction between the seven-bladed beta-propeller domains of the 2 proteins. The NOP7 complex associates with the 66S pre-ribosome.

The protein resides in the nucleus. It localises to the nucleolus. It is found in the nucleoplasm. Its function is as follows. Component of the NOP7 complex, which is required for maturation of the 25S and 5.8S ribosomal RNAs and formation of the 60S ribosome. The protein is Ribosome biogenesis protein ERB1 of Lodderomyces elongisporus (strain ATCC 11503 / CBS 2605 / JCM 1781 / NBRC 1676 / NRRL YB-4239) (Yeast).